Here is a 160-residue protein sequence, read N- to C-terminus: Cytochrome b6-f complex subunit 4 (160 aa).

Transmembrane regions (helical) follow at residues 36–56 (LLYTFPVVILGTITCCIGLAL), 95–115 (LLGVLSMASVPLGLIFVPFIE), and 127–147 (PIATTVFLVGTVVTIWLGIGA).

The protein belongs to the cytochrome b family. PetD subfamily. In terms of assembly, the 4 large subunits of the cytochrome b6-f complex are cytochrome b6, subunit IV (17 kDa polypeptide, petD), cytochrome f and the Rieske protein, while the 4 small subunits are petG, petL, petM and petN. The complex functions as a dimer.

The protein localises to the plastid. It is found in the chloroplast thylakoid membrane. In terms of biological role, component of the cytochrome b6-f complex, which mediates electron transfer between photosystem II (PSII) and photosystem I (PSI), cyclic electron flow around PSI, and state transitions. This Cyanidioschyzon merolae (strain NIES-3377 / 10D) (Unicellular red alga) protein is Cytochrome b6-f complex subunit 4.